A 553-amino-acid polypeptide reads, in one-letter code: NAD(P)H-quinone oxidoreductase chain 4 2 (553 aa).

14 helical membrane-spanning segments follow: residues F6–I26, V34–L54, I87–W107, L115–D135, L136–I156, F169–L189, A210–F230, S244–I264, I276–A296, V312–G332, A333–V353, V376–F396, V418–M438, and I487–A507.

This sequence belongs to the complex I subunit 4 family.

The protein resides in the cellular thylakoid membrane. The catalysed reaction is a plastoquinone + NADH + (n+1) H(+)(in) = a plastoquinol + NAD(+) + n H(+)(out). It carries out the reaction a plastoquinone + NADPH + (n+1) H(+)(in) = a plastoquinol + NADP(+) + n H(+)(out). Functionally, NDH-1 shuttles electrons from NAD(P)H, via FMN and iron-sulfur (Fe-S) centers, to quinones in the respiratory chain. The immediate electron acceptor for the enzyme in this species is believed to be plastoquinone. Couples the redox reaction to proton translocation (for every two electrons transferred, four hydrogen ions are translocated across the cytoplasmic membrane), and thus conserves the redox energy in a proton gradient. In Microcystis aeruginosa (strain NIES-843 / IAM M-2473), this protein is NAD(P)H-quinone oxidoreductase chain 4 2.